The chain runs to 282 residues: Cyclic AMP-dependent transcription factor ATF-5 (282 aa).

Positions 1 to 21 (MSLLATLGLELDRALLPASGL) are required for protein stabilization induced by IL1B. Position 29 is an N6-acetyllysine; by EP300 (lysine 29). Disordered regions lie at residues 116–152 (FLDA…DLPQ) and 173–238 (EEVG…ALEG). The interval 119 to 217 (APPLPPPSPP…GDRKQKKRDQ (99 aa)) is interaction with PTP4A1. The segment covering 120-140 (PPLPPPSPPPLPPPPLPPAPS) has biased composition (pro residues). Low complexity predominate over residues 141–150 (LPLSLPSFDL). A compositionally biased stretch (pro residues) spans 178–194 (PPLPPPQQPPPPSPPQP). Residues 208–271 (GDRKQKKRDQ…QYVKDLLIEV (64 aa)) form the bZIP domain. The basic motif stretch occupies residues 210 to 230 (RKQKKRDQNKSAALRYRQRKR). The tract at residues 236-250 (LEGECQGLEARNREL) is leucine-zipper. Residue serine 256 is modified to Phosphoserine.

The protein belongs to the bZIP family. Binds DNA as a dimer. Interacts with PTP4A1/PRL-1. Interacts with CCND3, but not with CCND1 or CCND2. Interacts with HSPA1A or HSPA1B; the interaction protects ATF5 from degradation via proteasome-dependent and caspase-dependent processes. Interacts (via C-terminal region) with NPM1 (via C-terminal region); the interaction leads to loss of association between HSPA1A or HSPA1B and ATF5 and promotes ATF5 degradation via proteasome-dependent and caspase-dependent processes. Interacts with NLK; the interaction stabilizes ATF5 at the protein level in a kinase-independent manner. Interacts with alpha-tubulin, gamma-tubulin members TUBGCP2 and TUBGCP4, PCNT; the ATF5:PCNT:polyglutamylated tubulin (PGT) tripartite unites the mother centriole and the pericentriolar material (PCM) in the centrosome. Interacts with CEBPB and EP300; EP300 is required for ATF5 and CEBPB interaction and DNA binding. Post-translationally, ubiquitinated by CDC34 and UBE2B in order to be degraded by the proteasome. Cisplatin inhibits ubiquitination and proteasome-mediated degradation by inhibiting the interaction with CDC34. Ubiquitination and degradation by the proteasome are inhibited by NLK in a kinase-independent manner. Phosphorylated by NLK, probably at Ser-92, Thr-94, Ser-126 and Ser-190. In terms of processing, acetylated at Lys-29 by EP300, the acetylation enhances the interaction with CEBPB, DNA-binding and transactivation activity. Widely expressed with higher expression levels in liver.

It localises to the cytoplasm. The protein resides in the nucleus. Its subcellular location is the cytoskeleton. The protein localises to the microtubule organizing center. It is found in the centrosome. Its function is as follows. Transcription factor that either stimulates or represses gene transcription through binding of different DNA regulatory elements such as cAMP response element (CRE) (consensus: 5'-GTGACGT[AC][AG]-3'), ATF5-specific response element (ARE) (consensus: 5'-C[CT]TCT[CT]CCTT[AT]-3') but also the amino acid response element (AARE), present in many viral and cellular promoters. Critically involved, often in a cell type-dependent manner, in cell survival, proliferation, and differentiation. Its transcriptional activity is enhanced by CCND3 and slightly inhibited by CDK4. Important regulator of the cerebral cortex formation, functions in cerebral cortical neuroprogenitor cells to maintain proliferation and to block differentiation into neurons. Must be down-regulated in order for such cells to exit the cycle and differentiate. Participates in the pathways by which SHH promotes cerebellar granule neuron progenitor cells proliferation. Critical for survival of mature olfactory sensory neurons (OSN), directs expression of OSN-specific genes. May be involved in osteogenic differentiation. Promotes cell proliferation and survival by inducing the expression of EGR1 sinergistically with ELK1. Once acetylated by EP300, binds to ARE sequences on target genes promoters, such as BCL2 and EGR1. Plays an anti-apoptotic role through the transcriptional regulation of BCL2, this function seems to be cell type-dependent. Cooperates with NR1I3/CAR in the transcriptional activation of CYP2B6 in liver. In hepatic cells, represses CRE-dependent transcription and inhibits proliferation by blocking at G2/M phase. May act as a negative regulator of IL1B transduction pathway in liver. Upon IL1B stimulus, cooperates with NLK to activate the transactivation activity of C/EBP subfamily members. Besides its function of transcription factor, acts as a cofactor of CEBPB to activate CEBPA and promote adipocyte differentiation. Regulates centrosome dynamics in a cell-cycle- and centriole-age-dependent manner. Forms 9-foci symmetrical ring scaffold around the mother centriole to control centrosome function and the interaction between centrioles and pericentriolar material. This Homo sapiens (Human) protein is Cyclic AMP-dependent transcription factor ATF-5 (ATF5).